Here is a 166-residue protein sequence, read N- to C-terminus: Interferon gamma (166 aa).

A signal peptide spans 1–23; sequence MKYTSYFLALLLCVLLGFSGSYG. Glutamine 24 is modified (pyrrolidone carboxylic acid). 2 N-linked (GlcNAc...) asparagine glycosylation sites follow: asparagine 39 and asparagine 106.

The protein belongs to the type II (or gamma) interferon family. Homodimer. Interacts with IFNGR1 (via extracellular domain); this interaction promotes IFNGR1 dimerization. Released primarily from activated T lymphocytes.

It is found in the secreted. In terms of biological role, type II interferon produced by immune cells such as T-cells and NK cells that plays crucial roles in antimicrobial, antiviral, and antitumor responses by activating effector immune cells and enhancing antigen presentation. Primarily signals through the JAK-STAT pathway after interaction with its receptor IFNGR1 to affect gene regulation. Upon IFNG binding, IFNGR1 intracellular domain opens out to allow association of downstream signaling components JAK2, JAK1 and STAT1, leading to STAT1 activation, nuclear translocation and transcription of IFNG-regulated genes. Many of the induced genes are transcription factors such as IRF1 that are able to further drive regulation of a next wave of transcription. Plays a role in class I antigen presentation pathway by inducing a replacement of catalytic proteasome subunits with immunoproteasome subunits. In turn, increases the quantity, quality, and repertoire of peptides for class I MHC loading. Increases the efficiency of peptide generation also by inducing the expression of activator PA28 that associates with the proteasome and alters its proteolytic cleavage preference. Up-regulates as well MHC II complexes on the cell surface by promoting expression of several key molecules such as cathepsins B/CTSB, H/CTSH, and L/CTSL. Participates in the regulation of hematopoietic stem cells during development and under homeostatic conditions by affecting their development, quiescence, and differentiation. The chain is Interferon gamma (IFNG) from Bubalus bubalis (Domestic water buffalo).